A 203-amino-acid chain; its full sequence is Holliday junction branch migration complex subunit RuvA (203 aa).

The segment at 1–61 (MIIYKYGKIM…EYTKVTYGFD (61 aa)) is domain I. The segment at 62–139 (NFKELVIFED…KFMKKLTSDE (78 aa)) is domain II. The interval 140 to 147 (AAKIKVPA) is flexible linker. Positions 147–203 (ASSENENKFLDTMKMLGFKQQQIKFALDKIELNDDIETCVENAIKLISQQQHETSRV) are domain III.

Belongs to the RuvA family. As to quaternary structure, homotetramer. Forms an RuvA(8)-RuvB(12)-Holliday junction (HJ) complex. HJ DNA is sandwiched between 2 RuvA tetramers; dsDNA enters through RuvA and exits via RuvB. An RuvB hexamer assembles on each DNA strand where it exits the tetramer. Each RuvB hexamer is contacted by two RuvA subunits (via domain III) on 2 adjacent RuvB subunits; this complex drives branch migration. In the full resolvosome a probable DNA-RuvA(4)-RuvB(12)-RuvC(2) complex forms which resolves the HJ.

The protein resides in the cytoplasm. The RuvA-RuvB-RuvC complex processes Holliday junction (HJ) DNA during genetic recombination and DNA repair, while the RuvA-RuvB complex plays an important role in the rescue of blocked DNA replication forks via replication fork reversal (RFR). RuvA specifically binds to HJ cruciform DNA, conferring on it an open structure. The RuvB hexamer acts as an ATP-dependent pump, pulling dsDNA into and through the RuvAB complex. HJ branch migration allows RuvC to scan DNA until it finds its consensus sequence, where it cleaves and resolves the cruciform DNA. The polypeptide is Holliday junction branch migration complex subunit RuvA (Metamycoplasma arthritidis (strain 158L3-1) (Mycoplasma arthritidis)).